A 1089-amino-acid chain; its full sequence is PALM2-AKAP2 fusion protein (1089 aa).

The stretch at 70-107 (SEEDEFKVKQLEDNIQRLEQEIQALESEESQISAKEQI) forms a coiled coil. Disordered stretches follow at residues 165–194 (SEDANQLRSKQDNCGDSRLEPAASSLSPDH), 210–231 (PGVTSTPHSKDHSSPFYSPSHN), and 289–362 (PAHS…SRDG). The segment covering 173 to 183 (SKQDNCGDSRL) has biased composition (basic and acidic residues). R315 and S318 each carry phosphoserine. Basic and acidic residues predominate over residues 317 to 328 (PSDRMAEGERAN). The segment covering 329–347 (GHSTDQPQDLLGNSLQAPA) has biased composition (polar residues). S348 carries the phosphoserine modification. Positions 348 to 357 (SPSSSTSSHC) are enriched in low complexity. K370 is covalently cross-linked (Glycyl lysine isopeptide (Lys-Gly) (interchain with G-Cter in SUMO1); alternate). K370 is covalently cross-linked (Glycyl lysine isopeptide (Lys-Gly) (interchain with G-Cter in SUMO2); alternate). Residues 429 to 517 (KNPGIAAKWW…LSTSQPCTAP (89 aa)) form a disordered region. A compositionally biased stretch (basic and acidic residues) spans 455–470 (LESHRKYKERKEKRAQ). The segment covering 471-508 (QEQLQLQQQQQQQLQQQQLQQQQLQQQQLQQQLQQQQL) has biased composition (low complexity). At S553 the chain carries Phosphoserine. The disordered stretch occupies residues 592–644 (TVGGTLEDGGTQAAKEQKAPCVSESQSAGAGPANAATQGKEGPYSEPSKRGPL). A phosphoserine mark is found at S678, S682, and S734. The segment covering 712–749 (FSMDNISDSGASNETPSALQENSLADFSLPQTPQTDNP) has biased composition (polar residues). 3 disordered regions span residues 712-783 (FSMD…DPLE), 800-899 (EQVD…YFSK), and 915-934 (TQESDVMVGPFKLRSRKQRT). T743 bears the Phosphothreonine mark. Positions 782–795 (LEYQAGLLVQNAIQ) are PKA-RII subunit binding domain. The span at 801–814 (QVDKAEAHTSKEGS) shows a compositional bias: basic and acidic residues. S847 carries the phosphoserine modification. Over residues 850–871 (QEKRDILPKNLPAEDRALREKG) the composition is skewed to basic and acidic residues. The stretch at 928–958 (RSRKQRTLSMIEEEIRAAQEREEELKRQRQV) forms a coiled coil. 4 positions are modified to phosphoserine: S936, S964, S995, and S1002. Residues 946–1021 (QEREEELKRQ…AAGTQRPKNL (76 aa)) form a disordered region.

As to expression, highly expressed in lung and weakly in thymus and cerebellum. Little or no expression in liver, heart and cerebral cortex. All isoforms are expressed in lung, but KL2A and KL2B isoforms are the principal isoforms in cerebellum.

It localises to the apical cell membrane. Binds to regulatory subunit (RII) of protein kinase A. May be involved in establishing polarity in signaling systems or in integrating PKA-RII isoforms with downstream effectors to capture, amplify and focus diffuse, trans-cellular signals carried by cAMP. Binds tp and modulates the structure of the actin cytoskeleton. The chain is PALM2-AKAP2 fusion protein from Mus musculus (Mouse).